We begin with the raw amino-acid sequence, 291 residues long: ADP-dependent (S)-NAD(P)H-hydrate dehydratase (291 aa).

The YjeF C-terminal domain maps to 5–273; the sequence is SKDILEEVIT…QALPTYMKKY (269 aa). (6S)-NADPHX-binding residues include alanine 40, glycine 103, and histidine 153. Glycine 215 provides a ligand contact to AMP. Aspartate 216 lines the (6S)-NADPHX pocket.

This sequence belongs to the NnrD/CARKD family. Homotetramer. Requires Mg(2+) as cofactor.

It catalyses the reaction (6S)-NADHX + ADP = AMP + phosphate + NADH + H(+). It carries out the reaction (6S)-NADPHX + ADP = AMP + phosphate + NADPH + H(+). Its function is as follows. Catalyzes the dehydration of the S-form of NAD(P)HX at the expense of ADP, which is converted to AMP. Together with NAD(P)HX epimerase, which catalyzes the epimerization of the S- and R-forms, the enzyme allows the repair of both epimers of NAD(P)HX, a damaged form of NAD(P)H that is a result of enzymatic or heat-dependent hydration. The polypeptide is ADP-dependent (S)-NAD(P)H-hydrate dehydratase (Enterococcus faecalis (strain ATCC 700802 / V583)).